Reading from the N-terminus, the 587-residue chain is uncharacterized protein (587 aa).

Positions 61–426 (GKGASKKAAL…DLPNWHHDAE (366 aa)) constitute a YcaO domain.

This is an uncharacterized protein from Haemophilus influenzae (strain ATCC 51907 / DSM 11121 / KW20 / Rd).